The chain runs to 381 residues: Trans-enoyl reductase iliB (381 aa).

50–53 lines the NADP(+) pocket; the sequence is VDGK. 145–152 provides a ligand contact to substrate; sequence ATLATVGL. NADP(+) contacts are provided by residues 213–216, Y231, and 278–279; these read SPGS and LD. Residue 298–302 participates in substrate binding; that stretch reads TYTQF. An NADP(+)-binding site is contributed by 367–368; it reads IS.

It belongs to the zinc-containing alcohol dehydrogenase family. Monomer.

The enzyme catalyses N-[(4E,6E,10S,12Z,14E)-6,10-dimethyl-3-oxohexadeca-4,6,12,14-tetraenoyl]-L-tyrosyl-[ACP] = (3E,5S)-3-[(2E,4E,8S,10E,12Z)-1-hydroxy-4,8-dimethyltetradeca-2,4,10,12-tetraen-1-ylidene]-5-[(4-hydroxyphenyl)methyl]pyrrolidine-2,4-dione + holo-[ACP] + H(+). It participates in mycotoxin biosynthesis. In terms of biological role, trans-enoyl reductase; part of the gene cluster that mediates the biosynthesis of ilicicolin H, a 4-hydroxy-2-pyridonealkaloid that has potent and broad antifungal activities by inhibiting the mitochondrial respiration chain. IliB collaborates with the hybrid PKS-NRPS synthetase iliA to assemble the backbone of ilicicolin H. The PKS portion of iliA and trans-acting enoyl reductase iliB work together to construct an octaketide, and two methyl groups are introduced by the MT domain of iliA during the chain assembly. The nascent chain is then condensed with tyrosine, catalyzed by the iliA C domain, and the resulting PKS-NRPS hybrid is offloaded by the iliA RED domain to form an advanced tetramic acid intermediate. The biosynthesis of ilicicolin H starts with formation of the tetramic acid by the hybrid PKS-NRPS synthetase iliA with the partnering trans-enoyl reductase iliB since iliA lacks a designated enoylreductase (ER) domain. The cytochrome P450 monooxygenase iliC then catalyzes the ring expansion of the tetramate to the acyclic 2-pyridone. The pericyclase iliD further converts the acyclic 2-pyridone into 8-epi-ilicicolin H. 8-epi-ilicicolin H might then spontaneously convert to ilicicolin H since ilicicolin H is produced in the absence of the epimerase iliE, in contrast to what was observed for the Talaromyces variabilis ilicolin H biosynthetic pathway. The protein is Trans-enoyl reductase iliB of Neonectria sp. (strain DH2).